The following is a 452-amino-acid chain: tRNA modification GTPase MnmE (452 aa).

Residues Arg-21, Glu-78, and Lys-118 each coordinate (6S)-5-formyl-5,6,7,8-tetrahydrofolate. Positions 214–375 constitute a TrmE-type G domain; sequence GMKVVIAGRP…LRDHLKQAMG (162 aa). K(+) is bound at residue Asn-224. GTP is bound by residues 224–229, 243–249, and 268–271; these read NAGKSS, TDIAGTT, and DTAG. Ser-228 lines the Mg(2+) pocket. Residues Thr-243, Ile-245, and Thr-248 each coordinate K(+). Thr-249 provides a ligand contact to Mg(2+). Lys-452 is a binding site for (6S)-5-formyl-5,6,7,8-tetrahydrofolate.

The protein belongs to the TRAFAC class TrmE-Era-EngA-EngB-Septin-like GTPase superfamily. TrmE GTPase family. As to quaternary structure, homodimer. Heterotetramer of two MnmE and two MnmG subunits. It depends on K(+) as a cofactor.

It localises to the cytoplasm. Exhibits a very high intrinsic GTPase hydrolysis rate. Involved in the addition of a carboxymethylaminomethyl (cmnm) group at the wobble position (U34) of certain tRNAs, forming tRNA-cmnm(5)s(2)U34. This Haemophilus influenzae (strain 86-028NP) protein is tRNA modification GTPase MnmE.